The sequence spans 466 residues: Uronate isomerase (466 aa).

It belongs to the metallo-dependent hydrolases superfamily. Uronate isomerase family.

It carries out the reaction D-glucuronate = D-fructuronate. The enzyme catalyses aldehydo-D-galacturonate = keto-D-tagaturonate. It participates in carbohydrate metabolism; pentose and glucuronate interconversion. The sequence is that of Uronate isomerase from Clostridium perfringens (strain 13 / Type A).